Consider the following 186-residue polypeptide: Ribosome-recycling factor (186 aa).

The protein belongs to the RRF family.

The protein localises to the cytoplasm. In terms of biological role, responsible for the release of ribosomes from messenger RNA at the termination of protein biosynthesis. May increase the efficiency of translation by recycling ribosomes from one round of translation to another. This Rickettsia canadensis (strain McKiel) protein is Ribosome-recycling factor.